We begin with the raw amino-acid sequence, 519 residues long: 3-octaprenyl-4-hydroxybenzoate carboxy-lyase (519 aa).

Asn177 serves as a coordination point for Mn(2+). Residues 180–182 (IYR), 194–196 (RWL), and 199–200 (RG) each bind prenylated FMN. Mn(2+) is bound at residue Glu243. Residue Asp318 is the Proton donor of the active site.

This sequence belongs to the UbiD family. In terms of assembly, homohexamer. The cofactor is prenylated FMN. Mn(2+) is required as a cofactor.

Its subcellular location is the cell membrane. The enzyme catalyses a 4-hydroxy-3-(all-trans-polyprenyl)benzoate + H(+) = a 2-(all-trans-polyprenyl)phenol + CO2. It participates in cofactor biosynthesis; ubiquinone biosynthesis. Its function is as follows. Catalyzes the decarboxylation of 3-octaprenyl-4-hydroxy benzoate to 2-octaprenylphenol, an intermediate step in ubiquinone biosynthesis. This Burkholderia mallei (strain ATCC 23344) protein is 3-octaprenyl-4-hydroxybenzoate carboxy-lyase.